A 761-amino-acid polypeptide reads, in one-letter code: Dipeptidyl-peptidase 4 (761 aa).

An N-terminal signal peptide occupies residues 1–15 (MTLSAWIILVTLAMA). Active-site charge relay system residues include Ser-622, Asp-706, and His-738.

It belongs to the peptidase S9C family.

It localises to the membrane. Functionally, may be involved in metabolism of dipeptides or may affect host defense mechanisms. The sequence is that of Dipeptidyl-peptidase 4 (DPP) from Giardia intestinalis (Giardia lamblia).